We begin with the raw amino-acid sequence, 161 residues long: Assembly protein P7 (161 aa).

As to quaternary structure, homodimer. Part of the packaging complex composed of RDRP, P4 and P7. Interacts with RDRP.

The protein localises to the virion. Functionally, assembly protein part of the packaging complex that packages the viral RNA segments, replicate them into a double-stranded form and transcribe them. Required for efficient procapsid assembly. Necessary for stable packaging. May stabilize the RNA-dependent RNA polymerase (RdRP) in its position at the three-fold axis on the inner side of empty-unexpanded procapsids. Could play a role in viral RNA recognition. Seems to be involved in the regulation of plus strand synthesis (transcription) as a fidelity factor. This chain is Assembly protein P7 (P7), found in Pseudomonas phage phi6 (Bacteriophage phi-6).